Here is a 1388-residue protein sequence, read N- to C-terminus: Kinesin-like protein KIF15 (1388 aa).

Residues 1–25 form a disordered region; sequence MAPGCKTELRSVTNGQSNQPSNEGD. Over residues 10–22 the composition is skewed to polar residues; the sequence is RSVTNGQSNQPSN. In terms of domain architecture, Kinesin motor spans 26–363; that stretch reads AIKVFVRIRP…LNFAQRAKLI (338 aa). ATP is bound at residue 109–116; that stretch reads GQTGSGKT. Residues 368–1388 are a coiled coil; it reads VVNEDTQGNV…FLKEKKRSES (1021 aa). Threonine 399 carries the post-translational modification Phosphothreonine. Serine 568 bears the Phosphoserine mark. Residue lysine 1009 is modified to N6-acetyllysine. Residues serine 1141 and serine 1169 each carry the phosphoserine modification. The interval 1228 to 1250 is disordered; that stretch reads QKENSDQNHPDNQQLKNEQEESI.

The protein belongs to the TRAFAC class myosin-kinesin ATPase superfamily. Kinesin family. KLP2 subfamily. Interacts with MKI67 and TPX2. In terms of tissue distribution, expressed in testis, colon, thymus and in breast cancer.

The protein resides in the cytoplasm. It localises to the cytoskeleton. It is found in the spindle. Plus-end directed kinesin-like motor enzyme involved in mitotic spindle assembly. The sequence is that of Kinesin-like protein KIF15 (KIF15) from Homo sapiens (Human).